The following is a 291-amino-acid chain: Nucleotide-binding protein lhv_0732 (291 aa).

13-20 serves as a coordination point for ATP; sequence GMSGAGKT. 61-64 is a binding site for GTP; that stretch reads DLRV.

It belongs to the RapZ-like family.

Its function is as follows. Displays ATPase and GTPase activities. The polypeptide is Nucleotide-binding protein lhv_0732 (Lactobacillus helveticus (strain DPC 4571)).